We begin with the raw amino-acid sequence, 468 residues long: GTPase Der (468 aa).

EngA-type G domains follow at residues 3-167 and 179-352; these read PTLV…PYAE and PVIA…TAAM. GTP-binding positions include 9–16, 56–60, 119–122, 185–192, 232–236, and 297–300; these read GRPNVGKS, DTGGF, NKAE, DTAGL, and NKWD. The KH-like domain maps to 353–437; sequence AHIPTPKLTR…PLRVEFRTGH (85 aa). Residues 434–468 are disordered; that stretch reads RTGHNPYAGKKAPPLTEEEARRAHSRRRRNRKKYG. The segment covering 456 to 468 has biased composition (basic residues); sequence AHSRRRRNRKKYG.

The protein belongs to the TRAFAC class TrmE-Era-EngA-EngB-Septin-like GTPase superfamily. EngA (Der) GTPase family. Associates with the 50S ribosomal subunit.

In terms of biological role, GTPase that plays an essential role in the late steps of ribosome biogenesis. The sequence is that of GTPase Der from Nitrosomonas eutropha (strain DSM 101675 / C91 / Nm57).